A 225-amino-acid chain; its full sequence is ATP-dependent Clp protease proteolytic subunit (225 aa).

Residue Ser-123 is the Nucleophile of the active site. His-148 is an active-site residue.

It belongs to the peptidase S14 family. Fourteen ClpP subunits assemble into 2 heptameric rings which stack back to back to give a disk-like structure with a central cavity, resembling the structure of eukaryotic proteasomes.

It is found in the cytoplasm. The enzyme catalyses Hydrolysis of proteins to small peptides in the presence of ATP and magnesium. alpha-casein is the usual test substrate. In the absence of ATP, only oligopeptides shorter than five residues are hydrolyzed (such as succinyl-Leu-Tyr-|-NHMec, and Leu-Tyr-Leu-|-Tyr-Trp, in which cleavage of the -Tyr-|-Leu- and -Tyr-|-Trp bonds also occurs).. Cleaves peptides in various proteins in a process that requires ATP hydrolysis. Has a chymotrypsin-like activity. Plays a major role in the degradation of misfolded proteins. The protein is ATP-dependent Clp protease proteolytic subunit of Chlorobium phaeovibrioides (strain DSM 265 / 1930) (Prosthecochloris vibrioformis (strain DSM 265)).